A 150-amino-acid polypeptide reads, in one-letter code: Snaclec 7 (150 aa).

An N-terminal signal peptide occupies residues 1–23 (MGRFISISFGLLVVFLSLSGTGA). Disulfide bonds link Cys-27/Cys-38, Cys-55/Cys-144, and Cys-121/Cys-136. Residues 34–145 (YEGYCYKVFN…CNDPRYFVCK (112 aa)) enclose the C-type lectin domain.

This sequence belongs to the snaclec family. In terms of assembly, heterodimer; disulfide-linked.

The protein localises to the secreted. Interferes with one step of hemostasis (modulation of platelet aggregation, or coagulation cascade, for example). This chain is Snaclec 7, found in Daboia siamensis (Eastern Russel's viper).